Consider the following 600-residue polypeptide: 1,8-cineole synthase 1, chloroplastic (600 aa).

A chloroplast-targeting transit peptide spans 1–31; sequence MATLRISSALIYQNTLTHHFRLRRPHRFVCK. Residue Asp-342 participates in dimethylallyl diphosphate binding. Residues Asp-342 and Asp-346 each contribute to the Mg(2+) site. Residues 342 to 346 carry the DDXXD motif motif; it reads DDIYD. Residues Glu-420, Arg-484, and Asn-487 each contribute to the dimethylallyl diphosphate site. The Mg(2+) site is built by Asn-487, Thr-491, and Glu-495.

Belongs to the terpene synthase family. Tpsb subfamily. It depends on Mg(2+) as a cofactor. Mn(2+) serves as cofactor. Predominantly expressed in roots and at much lower levels in siliques. Not found in leaves, flowers or stems. Also detected in flowers in cv. Landsberg erecta. Not expressed in root apical meristem and elongation zone. Found in the vascular system of young roots and additionally in the cortex and epidermal cell layer of older roots.

It is found in the plastid. The protein localises to the chloroplast. The catalysed reaction is (2E)-geranyl diphosphate + H2O = 1,8-cineole + diphosphate. Its pathway is secondary metabolite biosynthesis; terpenoid biosynthesis. In terms of biological role, involved in monoterpene (C10) biosynthesis. The major product is 1,8-cineole (52%) followed by minor amounts of sabinene (14.5%), myrcene (13.3%), (-)-(1S)-beta-pinene (7.8%), (-)-(4S)-limonene (4.0%), (E)-beta-ocimene (2.7%), alpha-terpineol (2.4%), (-)-(1S)-alpha-pinene (1.9%), terpinolene (0.8%), and (+)-alpha-thujene (0.6%). The protein is 1,8-cineole synthase 1, chloroplastic (TPS27) of Arabidopsis thaliana (Mouse-ear cress).